A 324-amino-acid chain; its full sequence is NADH-ubiquinone oxidoreductase chain 1 (324 aa).

Transmembrane regions (helical) follow at residues 9 to 29, 43 to 63, 77 to 97, 106 to 126, 146 to 166, 177 to 197, 228 to 248, 259 to 279, and 299 to 319; these read LINP…LTLI, PNIV…KLFI, FLAT…PLPL, LGLL…LGSG, ISYE…AGGF, TIWL…STLA, LFFL…VILF, QISS…FLWI, and FLPL…ATTS.

Belongs to the complex I subunit 1 family.

The protein localises to the mitochondrion inner membrane. It carries out the reaction a ubiquinone + NADH + 5 H(+)(in) = a ubiquinol + NAD(+) + 4 H(+)(out). Core subunit of the mitochondrial membrane respiratory chain NADH dehydrogenase (Complex I) that is believed to belong to the minimal assembly required for catalysis. Complex I functions in the transfer of electrons from NADH to the respiratory chain. The immediate electron acceptor for the enzyme is believed to be ubiquinone. The chain is NADH-ubiquinone oxidoreductase chain 1 (MT-ND1) from Scyliorhinus canicula (Small-spotted catshark).